The sequence spans 363 residues: 5-formaminoimidazole-4-carboxamide-1-(beta)-D-ribofuranosyl 5'-monophosphate synthetase (363 aa).

2 residues coordinate 5-amino-1-(5-phospho-beta-D-ribosyl)imidazole-4-carboxamide: histidine 29 and serine 96. An ATP-grasp domain is found at 118 to 354 (RDILRWEAER…ISREIKNAIE (237 aa)). ATP is bound by residues 148–210 (PEDI…TNFC) and glutamate 232. Asparagine 260 contributes to the 5-amino-1-(5-phospho-beta-D-ribosyl)imidazole-4-carboxamide binding site. Mg(2+) is bound by residues glutamine 299 and glutamate 312.

It belongs to the phosphohexose mutase family. Mg(2+) is required as a cofactor. It depends on Mn(2+) as a cofactor.

The enzyme catalyses 5-amino-1-(5-phospho-beta-D-ribosyl)imidazole-4-carboxamide + formate + ATP = 5-formamido-1-(5-phospho-D-ribosyl)imidazole-4-carboxamide + ADP + phosphate. It functions in the pathway purine metabolism; IMP biosynthesis via de novo pathway; 5-formamido-1-(5-phospho-D-ribosyl)imidazole-4-carboxamide from 5-amino-1-(5-phospho-D-ribosyl)imidazole-4-carboxamide (formate route): step 1/1. Catalyzes the ATP- and formate-dependent formylation of 5-aminoimidazole-4-carboxamide-1-beta-d-ribofuranosyl 5'-monophosphate (AICAR) to 5-formaminoimidazole-4-carboxamide-1-beta-d-ribofuranosyl 5'-monophosphate (FAICAR) in the absence of folates. In Methanosphaera stadtmanae (strain ATCC 43021 / DSM 3091 / JCM 11832 / MCB-3), this protein is 5-formaminoimidazole-4-carboxamide-1-(beta)-D-ribofuranosyl 5'-monophosphate synthetase.